The chain runs to 114 residues: TYRO protein tyrosine kinase-binding protein (114 aa).

A signal peptide spans 1–27 (MGAPEPSWCFLFLPVLLTVGGLSPVQA). At 28–42 (QSDNYPGCECSSVSP) the chain is on the extracellular side. The chain crosses the membrane as a helical span at residues 43–63 (GVLAGIVLGDLVLTLLIALAV). D52 provides a ligand contact to Ca(2+). Over 64–114 (YSLGRLVSRGRGTADGTRKQHMAETESPYQELQGQRPEVYSDLNTQRQYYR) the chain is Cytoplasmic. The disordered stretch occupies residues 72–114 (RGRGTADGTRKQHMAETESPYQELQGQRPEVYSDLNTQRQYYR). The region spanning 81–109 (RKQHMAETESPYQELQGQRPEVYSDLNTQ) is the ITAM domain. Y92 and Y103 each carry phosphotyrosine. Residues 105–114 (DLNTQRQYYR) are compositionally biased toward polar residues.

It belongs to the TYROBP family. In terms of assembly, homodimer; disulfide-linked. Homotrimer; disulfide-linked. Homotetramer; disulfide-linked. Homotrimers and homotetramers form when low levels of partner receptors are available and is competitive with assembly with interacting receptors. They may represent alternative oligomerization states or may be intermediates in the receptor assembly process. Binding of a metal cation aids in homooligomerization through coordination of the metal ion by the subunits of the oligomer. Interacts with TREM1. Interacts with TREM2. Interacts with CLECSF5. Interacts with CD300LB and CD300C2. Interacts with CD300E. Interacts (via ITAM domain) with SYK (via SH2 domains); activates SYK mediating neutrophils and macrophages integrin-mediated activation. Interacts with KLRC2. Interacts with CD300H. Interacts with KLRD1. Interacts with SIGLEC1. Following ligand binding by associated receptors, tyrosine phosphorylated in the ITAM domain which leads to activation of additional tyrosine kinases and subsequent cell activation.

It localises to the cell membrane. Adapter protein which non-covalently associates with activating receptors found on the surface of a variety of immune cells to mediate signaling and cell activation following ligand binding by the receptors. TYROBP is tyrosine-phosphorylated in the ITAM domain following ligand binding by the associated receptors which leads to activation of additional tyrosine kinases and subsequent cell activation. Also has an inhibitory role in some cells. Non-covalently associates with activating receptors of the CD300 family to mediate cell activation. Also mediates cell activation through association with activating receptors of the CD200R family. Required for neutrophil activation mediated by integrin. Required for the activation of myeloid cells mediated by the CLEC5A/MDL1 receptor. Associates with natural killer (NK) cell receptors such as the KLRD1/KLRC2 heterodimer to mediate NK cell activation. Associates with TREM1 to mediate activation of neutrophils and monocytes. Associates with TREM2 on monocyte-derived dendritic cells to mediate up-regulation of chemokine receptor CCR7 and dendritic cell maturation and survival. PAssociation with TREM2 mediates cytokine-induced formation of multinucleated giant cells which are formed by the fusion of macrophages. Stabilizes the TREM2 C-terminal fragment (TREM2-CTF) produced by TREM2 ectodomain shedding which suppresses the release of pro-inflammatory cytokines. In microglia, required with TREM2 for phagocytosis of apoptotic neurons. Required with ITGAM/CD11B in microglia to control production of microglial superoxide ions which promote the neuronal apoptosis that occurs during brain development. Promotes pro-inflammatory responses in microglia following nerve injury which accelerates degeneration of injured neurons. ositively regulates the expression of the IRAK3/IRAK-M kinase and IL10 production by liver dendritic cells and inhibits their T cell allosimulatory ability. Negatively regulates B cell proliferation. Required for CSF1-mediated osteoclast cytoskeletal organization. Positively regulates multinucleation during osteoclast development. The sequence is that of TYRO protein tyrosine kinase-binding protein from Rattus norvegicus (Rat).